A 97-amino-acid polypeptide reads, in one-letter code: uncharacterized protein (97 aa).

This is an uncharacterized protein from Shigella flexneri.